A 613-amino-acid polypeptide reads, in one-letter code: Zinc metalloproteinase-disintegrin-like MTP4 (613 aa).

An N-terminal signal peptide occupies residues 1 to 20; the sequence is MIEVLLVTICFTVFPYQGSS. The propeptide occupies 21-191; sequence IILESGNVND…DEPIEKISQL (171 aa). A Peptidase M12B domain is found at 205-401; the sequence is KYIELYVVVD…VRPQCILNKP (197 aa). Position 208 (Glu208) interacts with Ca(2+). An N-linked (GlcNAc...) asparagine glycan is attached at Asn282. Ca(2+) is bound at residue Asp292. Cystine bridges form between Cys316–Cys396, Cys356–Cys380, and Cys358–Cys363. Positions 341, 345, and 351 each coordinate Zn(2+). Ca(2+) contacts are provided by Cys396, Asn399, Asn414, Phe416, Glu418, Glu421, and Asp424. One can recognise a Disintegrin domain in the interval 409-495; sequence PPVCGNYFVE…KCPTDSFQRN (87 aa). 15 cysteine pairs are disulfide-bonded: Cys412–Cys441, Cys423–Cys436, Cys425–Cys431, Cys435–Cys458, Cys449–Cys455, Cys454–Cys480, Cys467–Cys487, Cys474–Cys506, Cys499–Cys511, Cys518–Cys568, Cys533–Cys575, Cys543–Cys577, Cys546–Cys556, Cys563–Cys601, and Cys595–Cys606. N-linked (GlcNAc...) asparagine glycosylation is present at Asn437. The D/ECD-tripeptide signature appears at 473-475; it reads DCD. Ca(2+)-binding residues include Asp475, Leu476, Glu478, and Asp490. The interval 561 to 574 is hypervariable region that may play important roles toward cell migration; that stretch reads KMCGKLLCEKGNAT. N-linked (GlcNAc...) asparagine glycosylation occurs at Asn572.

The protein belongs to the venom metalloproteinase (M12B) family. P-III subfamily. In terms of assembly, monomer. The cofactor is Zn(2+). In terms of tissue distribution, expressed by the venom gland.

The protein resides in the secreted. Functionally, snake venom zinc metalloproteinase that may impair hemostasis in the prey. This is Zinc metalloproteinase-disintegrin-like MTP4 from Drysdalia coronoides (White-lipped snake).